We begin with the raw amino-acid sequence, 284 residues long: 4-diphosphocytidyl-2-C-methyl-D-erythritol kinase (284 aa).

The active site involves Lys-10. 92–102 (PYGAGLGSGSS) serves as a coordination point for ATP. Residue Asp-134 is part of the active site.

It belongs to the GHMP kinase family. IspE subfamily.

The enzyme catalyses 4-CDP-2-C-methyl-D-erythritol + ATP = 4-CDP-2-C-methyl-D-erythritol 2-phosphate + ADP + H(+). The protein operates within isoprenoid biosynthesis; isopentenyl diphosphate biosynthesis via DXP pathway; isopentenyl diphosphate from 1-deoxy-D-xylulose 5-phosphate: step 3/6. Catalyzes the phosphorylation of the position 2 hydroxy group of 4-diphosphocytidyl-2C-methyl-D-erythritol. The protein is 4-diphosphocytidyl-2-C-methyl-D-erythritol kinase of Salinibacter ruber (strain DSM 13855 / M31).